A 314-amino-acid polypeptide reads, in one-letter code: Vacuolar membrane protein FOSTERSB_4073 (314 aa).

The tract at residues 32 to 60 (KPTSSVVSETSSKSLPSLTSSAFSTSSGA) is disordered. A helical transmembrane segment spans residues 93-113 (VYIAVGAVIGAIFISILIWWL). Residues serine 148, serine 254, and serine 274 each carry the phosphoserine modification. A disordered region spans residues 240–309 (EERKLNLNRP…PSMFLDDVLN (70 aa)). Basic and acidic residues predominate over residues 254-269 (SPERKEKKINSMEGYH).

Belongs to the PRM5 family.

The protein localises to the vacuole membrane. The polypeptide is Vacuolar membrane protein FOSTERSB_4073 (Saccharomyces cerevisiae (strain FostersB) (Baker's yeast)).